Consider the following 600-residue polypeptide: Aspartate--tRNA ligase (600 aa).

Glu175 lines the L-aspartate pocket. An aspartate region spans residues 199–202 (QLFK). Residue Arg221 coordinates L-aspartate. ATP-binding positions include 221–223 (RDE) and Gln230. His448 is an L-aspartate binding site. Residue Glu484 coordinates ATP. Residue Arg491 participates in L-aspartate binding. Position 536-539 (536-539 (GLDR)) interacts with ATP.

Belongs to the class-II aminoacyl-tRNA synthetase family. Type 1 subfamily. As to quaternary structure, homodimer.

The protein localises to the cytoplasm. The enzyme catalyses tRNA(Asp) + L-aspartate + ATP = L-aspartyl-tRNA(Asp) + AMP + diphosphate. Catalyzes the attachment of L-aspartate to tRNA(Asp) in a two-step reaction: L-aspartate is first activated by ATP to form Asp-AMP and then transferred to the acceptor end of tRNA(Asp). This is Aspartate--tRNA ligase from Limosilactobacillus reuteri (strain DSM 20016) (Lactobacillus reuteri).